The sequence spans 236 residues: Methylosome subunit pICln (236 aa).

Residues 1 to 20 (MSFLKSFPPPGPTEGLRHQQ) are disordered. N-acetylserine is present on serine 2. A phosphoserine mark is found at serine 101, serine 143, serine 192, serine 194, serine 197, and serine 209. Threonine 222 bears the Phosphothreonine mark.

This sequence belongs to the pICln (TC 1.A.47) family. As to quaternary structure, component of the methylosome, a 20S complex containing at least PRMT5/SKB1, WDR77/MEP50 and CLNS1A/pICln. May mediate SNRPD1 and SNRPD3 methylation. Forms a 6S pICln-Sm complex composed of CLNS1A/pICln, SNRPD1, SNRPD2, SNRPE, SNRPF and SNRPG; ring-like structure where CLNS1A/pICln mimics additional Sm proteins and which is unable to assemble into the core snRNP. Interacts with LSM10 and LSM11. Widely distributed but expressed more abundantly in nonpigmented ciliary epithelial cells than in pigmented ones.

The protein localises to the cytoplasm. The protein resides in the cytosol. It is found in the nucleus. Its subcellular location is the cytoskeleton. In terms of biological role, involved in both the assembly of spliceosomal snRNPs and the methylation of Sm proteins. Chaperone that regulates the assembly of spliceosomal U1, U2, U4 and U5 small nuclear ribonucleoproteins (snRNPs), the building blocks of the spliceosome, and thereby plays an important role in the splicing of cellular pre-mRNAs. Most spliceosomal snRNPs contain a common set of Sm proteins SNRPB, SNRPD1, SNRPD2, SNRPD3, SNRPE, SNRPF and SNRPG that assemble in a heptameric protein ring on the Sm site of the small nuclear RNA to form the core snRNP (Sm core). In the cytosol, the Sm proteins SNRPD1, SNRPD2, SNRPE, SNRPF and SNRPG are trapped in an inactive 6S pICln-Sm complex by the chaperone CLNS1A that controls the assembly of the core snRNP. Dissociation by the SMN complex of CLNS1A from the trapped Sm proteins and their transfer to an SMN-Sm complex triggers the assembly of core snRNPs and their transport to the nucleus. The polypeptide is Methylosome subunit pICln (CLNS1A) (Oryctolagus cuniculus (Rabbit)).